A 137-amino-acid chain; its full sequence is Actin-depolymerizing factor 2 (137 aa).

The region spanning 5–137 is the ADF-H domain; sequence ASGMAVHDDC…GLDVFKSRTN (133 aa). Phosphoserine is present on S6.

This sequence belongs to the actin-binding proteins ADF family. As to quaternary structure, interacts with AIP1-1.

It is found in the cytoplasm. Its subcellular location is the cytoskeleton. Its function is as follows. Actin-depolymerizing protein. Severs actin filaments (F-actin) and binds to actin monomers. Required for normal cell growth, plant development, cell organ expansion and flowering. Essential for root-knot nematode infection. This is Actin-depolymerizing factor 2 (ADF2) from Arabidopsis thaliana (Mouse-ear cress).